The following is a 132-amino-acid chain: MIKEFKEFIMRGNVLDMAVGVILGAALKSIVDSLTKNLINPIISLFVGQVDLSGIAVTIPGTKAVFQIGNFLNDVINFLIIAIIVFLIVKGFNKLRDMGKKTEEEVAEEAAPTQEELYLKEIRDLLANKDHQ.

3 helical membrane-spanning segments follow: residues 14–34 (VLDMAVGVILGAALKSIVDSL), 39–59 (INPIISLFVGQVDLSGIAVTI), and 68–88 (IGNFLNDVINFLIIAIIVFLI).

It belongs to the MscL family. In terms of assembly, homopentamer.

It is found in the cell membrane. Functionally, channel that opens in response to stretch forces in the membrane lipid bilayer. May participate in the regulation of osmotic pressure changes within the cell. The protein is Large-conductance mechanosensitive channel of Latilactobacillus sakei subsp. sakei (strain 23K) (Lactobacillus sakei subsp. sakei).